Consider the following 234-residue polypeptide: Synaptogyrin-1 (234 aa).

At Met-1 the chain carries N-acetylmethionine. The Cytoplasmic portion of the chain corresponds to 1–23; the sequence is MEGGAYGAGKAGGAFDPYTLVRQ. One can recognise an MARVEL domain in the interval 20 to 173; the sequence is LVRQPHTILR…QAVLAFQRYQ (154 aa). Residues 24–44 traverse the membrane as a helical segment; the sequence is PHTILRVVSWVFSIVVFGSIV. Over 45–71 the chain is Lumenal; sequence NEGYLNNPEEEEEFCIYNRNPNACSYG. Residues 72–92 traverse the membrane as a helical segment; sequence VTVGVLAFLTCLVYLALDVYF. Topologically, residues 93–104 are cytoplasmic; that stretch reads PQISSVKDRKKA. A helical transmembrane segment spans residues 105–125; it reads VLSDIGVSAFWAFFWFVGFCF. Topologically, residues 126–148 are lumenal; that stretch reads LANQWQVSKPKDNPLNEGTDAAR. The chain crosses the membrane as a helical span at residues 149–169; the sequence is AAIAFSFFSIFTWAGQAVLAF. Residues 170–234 are Cytoplasmic-facing; the sequence is QRYQIGADSA…EPQGYQSQGY (65 aa). The segment at 201–234 is disordered; the sequence is EPSAGSDPTGMGGTYQHPANAFDAEPQGYQSQGY.

This sequence belongs to the synaptogyrin family. In terms of tissue distribution, nervous system (at protein level).

Its subcellular location is the cytoplasmic vesicle. The protein localises to the secretory vesicle. The protein resides in the synaptic vesicle membrane. It is found in the melanosome. Functionally, may play a role in regulated exocytosis. Modulates the localization of synaptophysin/SYP into synaptic-like microvesicles and may therefore play a role in synaptic-like microvesicle formation and/or maturation. Involved in the regulation of short-term and long-term synaptic plasticity. In Rattus norvegicus (Rat), this protein is Synaptogyrin-1.